The sequence spans 107 residues: Nucleoid-associated protein HNE_0371 (107 aa).

Belongs to the YbaB/EbfC family. Homodimer.

The protein resides in the cytoplasm. Its subcellular location is the nucleoid. Its function is as follows. Binds to DNA and alters its conformation. May be involved in regulation of gene expression, nucleoid organization and DNA protection. In Hyphomonas neptunium (strain ATCC 15444), this protein is Nucleoid-associated protein HNE_0371.